A 113-amino-acid polypeptide reads, in one-letter code: uncharacterized protein (113 aa).

The 48-residue stretch at 41–88 (DWHHHPDSDELFIVLEGELLIDFKDKETAVLKANDSLLIPKGTVHRTR) folds into the Cupin type-2 domain.

Belongs to the SchB/CurC family.

This is an uncharacterized protein from Bacillus subtilis (strain 168).